We begin with the raw amino-acid sequence, 119 residues long: Membrane-anchored ubiquitin-fold protein 1 (119 aa).

A Ubiquitin-like domain is found at 9-75 (FEIKFRLPDG…LENNKTLSEC (67 aa)). Cys116 is modified (cysteine methyl ester). A lipid anchor (S-farnesyl cysteine) is attached at Cys116. Positions 117–119 (SIM) are cleaved as a propeptide — removed in mature form.

Its subcellular location is the cell membrane. May serve as docking site to facilitate the association of other proteins to the plasma membrane. This Oryza sativa subsp. japonica (Rice) protein is Membrane-anchored ubiquitin-fold protein 1 (MUB1).